The following is a 187-amino-acid chain: Cytochrome b-245 chaperone 1 (187 aa).

The chain crosses the membrane as a helical span at residues 20-42 (GIRSWSLLVGILSTGLAAAYYSG). A disordered region spans residues 167–187 (ESPSERSQSSDSEPDGPGGQS). Phosphoserine occurs at positions 168 and 170.

Belongs to the CYBC1 family. As to quaternary structure, interacts with CYBB; CYBC1 may act as a chaperone stabilizing Cytochrome b-245 heterodimer.

Its subcellular location is the endoplasmic reticulum membrane. Its function is as follows. Functions as a chaperone necessary for a stable expression of the CYBA and CYBB subunits of the cytochrome b-245 heterodimer. Controls the phagocyte respiratory burst and is essential for innate immunity. The sequence is that of Cytochrome b-245 chaperone 1 from Mus musculus (Mouse).